A 290-amino-acid chain; its full sequence is Porphobilinogen deaminase (290 aa).

An S-(dipyrrolylmethanemethyl)cysteine modification is found at Cys-237.

This sequence belongs to the HMBS family. Monomer. Requires dipyrromethane as cofactor.

It carries out the reaction 4 porphobilinogen + H2O = hydroxymethylbilane + 4 NH4(+). Its pathway is porphyrin-containing compound metabolism; protoporphyrin-IX biosynthesis; coproporphyrinogen-III from 5-aminolevulinate: step 2/4. Its function is as follows. Tetrapolymerization of the monopyrrole PBG into the hydroxymethylbilane pre-uroporphyrinogen in several discrete steps. The sequence is that of Porphobilinogen deaminase from Clostridium botulinum (strain 657 / Type Ba4).